Reading from the N-terminus, the 87-residue chain is Large ribosomal subunit protein bL27 (87 aa).

It belongs to the bacterial ribosomal protein bL27 family.

This is Large ribosomal subunit protein bL27 from Phocaeicola vulgatus (strain ATCC 8482 / DSM 1447 / JCM 5826 / CCUG 4940 / NBRC 14291 / NCTC 11154) (Bacteroides vulgatus).